The primary structure comprises 254 residues: Mannose-binding protein (254 aa).

A signal peptide spans 1–19 (MTLLQPFSALLLCLSLMMA). Residues 46 to 99 (NGLPGRDGRDGPKGEKGDPGEGLRGLQGLPGKAGPQGLKGEVGPQGEKGQKGER) form a disordered region. Basic and acidic residues predominate over residues 51–66 (RDGRDGPKGEKGDPGE). Pro-57 carries the post-translational modification 4-hydroxyproline. 5-hydroxylysine occurs at positions 58 and 61. O-linked (Gal...) hydroxylysine glycans are attached at residues Lys-58 and Lys-61. Residue Pro-75 is modified to 4-hydroxyproline. 5-hydroxylysine is present on residues Lys-93 and Lys-96. A C-type lectin domain is found at 140 to 250 (VGKKMFVSTG…LDCSNSNIFI (111 aa)). 2 disulfide bridges follow: Cys-161–Cys-252 and Cys-229–Cys-243.

As to quaternary structure, oligomeric complex of 3 or more homotrimers.

The protein resides in the secreted. Its function is as follows. Calcium-dependent lectin involved in innate immune defense. Binds mannose, fucose and N-acetylglucosamine on different microorganisms and activates the lectin complement pathway. The sequence is that of Mannose-binding protein from Gallus gallus (Chicken).